A 123-amino-acid chain; its full sequence is Small ribosomal subunit protein uS12c (123 aa).

This sequence belongs to the universal ribosomal protein uS12 family. In terms of assembly, part of the 30S ribosomal subunit.

It localises to the plastid. It is found in the chloroplast. With S4 and S5 plays an important role in translational accuracy. Located at the interface of the 30S and 50S subunits. In Chara vulgaris (Common stonewort), this protein is Small ribosomal subunit protein uS12c (rps12).